We begin with the raw amino-acid sequence, 479 residues long: Glycogen synthase (479 aa).

An ADP-alpha-D-glucose-binding site is contributed by lysine 15.

The protein belongs to the glycosyltransferase 1 family. Bacterial/plant glycogen synthase subfamily.

The enzyme catalyses [(1-&gt;4)-alpha-D-glucosyl](n) + ADP-alpha-D-glucose = [(1-&gt;4)-alpha-D-glucosyl](n+1) + ADP + H(+). The protein operates within glycan biosynthesis; glycogen biosynthesis. Its function is as follows. Synthesizes alpha-1,4-glucan chains using ADP-glucose. This Nostoc punctiforme (strain ATCC 29133 / PCC 73102) protein is Glycogen synthase.